Reading from the N-terminus, the 339-residue chain is DNA-directed RNA polymerase subunit alpha (339 aa).

Residues 1-233 are alpha N-terminal domain (alpha-NTD); the sequence is MVREEVAGST…DLFLPFLHAE (233 aa). Positions 266 to 339 are alpha C-terminal domain (alpha-CTD); sequence GIPLNCIFID…IDLLKNKLSF (74 aa).

It belongs to the RNA polymerase alpha chain family. As to quaternary structure, in plastids the minimal PEP RNA polymerase catalytic core is composed of four subunits: alpha, beta, beta', and beta''. When a (nuclear-encoded) sigma factor is associated with the core the holoenzyme is formed, which can initiate transcription.

The protein localises to the plastid. It is found in the chloroplast. It carries out the reaction RNA(n) + a ribonucleoside 5'-triphosphate = RNA(n+1) + diphosphate. DNA-dependent RNA polymerase catalyzes the transcription of DNA into RNA using the four ribonucleoside triphosphates as substrates. In Psathyrostachys juncea (Russian wildrye), this protein is DNA-directed RNA polymerase subunit alpha.